We begin with the raw amino-acid sequence, 405 residues long: Putative arsenical pump-driving ATPase (405 aa).

8 to 15 (GKGGVGKT) serves as a coordination point for ATP.

It belongs to the arsA ATPase family.

It carries out the reaction arsenite(in) + ATP + H2O = arsenite(out) + ADP + phosphate + H(+). Anion-transporting ATPase. Catalyzes the extrusion of arsenite. The chain is Putative arsenical pump-driving ATPase from Prosthecochloris vibrioformis (Chlorobium vibrioforme).